Reading from the N-terminus, the 290-residue chain is 4-hydroxybenzoate octaprenyltransferase (290 aa).

8 consecutive transmembrane segments (helical) span residues 33 to 53 (LAALWVAADGFPGWHLLAVFV), 91 to 111 (LGVREAALVGVVLTLVAFVLV), 116 to 136 (WEAVAWSVPAVLFTILYPFTK), 138 to 158 (FFAMPQAFLGIAFNFGIVIAF), 165 to 185 (VPATAWVLWLANLFLVLAYDT), 212 to 232 (VAAIMGFFVLCLGLTAWVLAP), 237 to 257 (WPLWLGLGVAAAQVAWHFTLI), and 269 to 289 (FSKSHWIGAAIFAGVALGYLL).

It belongs to the UbiA prenyltransferase family. Mg(2+) serves as cofactor.

Its subcellular location is the cell inner membrane. It catalyses the reaction all-trans-octaprenyl diphosphate + 4-hydroxybenzoate = 4-hydroxy-3-(all-trans-octaprenyl)benzoate + diphosphate. It participates in cofactor biosynthesis; ubiquinone biosynthesis. Catalyzes the prenylation of para-hydroxybenzoate (PHB) with an all-trans polyprenyl group. Mediates the second step in the final reaction sequence of ubiquinone-8 (UQ-8) biosynthesis, which is the condensation of the polyisoprenoid side chain with PHB, generating the first membrane-bound Q intermediate 3-octaprenyl-4-hydroxybenzoate. In Acidovorax ebreus (strain TPSY) (Diaphorobacter sp. (strain TPSY)), this protein is 4-hydroxybenzoate octaprenyltransferase.